A 170-amino-acid chain; its full sequence is Cathelicidin antimicrobial peptide (170 aa).

Positions 1–30 (MKTQRHGPSLGRWSLVLLLLGLVMPLAIVA) are cleaved as a signal peptide. Positions 31–131 (QVLSYQEAVL…DISCDKDNRR (101 aa)) are cleaved as a propeptide — cathelin-like domain (CLD). Cystine bridges form between Cys86–Cys97 and Cys108–Cys125. Residues 150–162 (LKKIGQKIKDFLG) form an active core region.

It belongs to the cathelicidin family. Monomer, homodimer or homotrimer (in vitro). Oligomerizes as tetra- or hexamer in solution (in vitro). Proteolytically cleaved by proteinase PRTN3 into antibacterial peptide LL-37. Proteolytically cleaved by cathepsin CTSG and neutrophil elastase ELANE. In terms of processing, resistant to proteolytic degradation in solution, and when bound to both zwitterionic (mimicking mammalian membranes) and negatively charged membranes (mimicking bacterial membranes). Post-translationally, after secretion onto the skin surface, the CAMP gene product is processed by a serine protease-dependent mechanism into multiple novel antimicrobial peptides distinct from and shorter than cathelicidin LL-37. These peptides show enhanced antimicrobial action, acquiring the ability to kill skin pathogens such as S.aureus, E.coli and C.albicans. These peptides have lost the ability to stimulate CXCL8/IL8 release from keratinocytes. The peptides act synergistically, killing bacteria at lower concentrations when present together, and maintain activity at increased salt condition.

It localises to the secreted. The protein localises to the vesicle. Functionally, antimicrobial protein that is an integral component of the innate immune system. Binds to bacterial lipopolysaccharides (LPS). Acts via neutrophil N-formyl peptide receptors to enhance the release of CXCL2. Postsecretory processing generates multiple cathelicidin antimicrobial peptides with various lengths which act as a topical antimicrobial defense in sweat on skin. The unprocessed precursor form, cathelicidin antimicrobial peptide, inhibits the growth of Gram-negative E.coli and E.aerogenes with efficiencies comparable to that of the mature peptide LL-37 (in vitro). In terms of biological role, antimicrobial peptide that is an integral component of the innate immune system. Binds to bacterial lipopolysaccharides (LPS). Causes membrane permeabilization by forming transmembrane pores (in vitro). Causes lysis of E.coli. Exhibits antimicrobial activity against Gram-negative bacteria such as P.aeruginosa, S.typhimurium, E.aerogenes, E.coli and P.syringae, Gram-positive bacteria such as L.monocytogenes, S.epidermidis, S.pyogenes and S.aureus, as well as vancomycin-resistant enterococci (in vitro). Exhibits antimicrobial activity against methicillin-resistant S.aureus, P.mirabilis, and C.albicans in low-salt media, but not in media containing 100 mM NaCl (in vitro). Forms chiral supramolecular assemblies with quinolone signal (PQS) molecules of P.aeruginosa, which may lead to interference of bacterial quorum signaling and perturbance of bacterial biofilm formation. May form supramolecular fiber-like assemblies on bacterial membranes. Induces cytokine and chemokine producation as well as TNF/TNFA and CSF2/GMCSF production in normal human keratinocytes. Exhibits hemolytic activity against red blood cells. Exhibits antimicrobial activity against E.coli and B.megaterium (in vitro). This Trachypithecus obscurus (Dusky leaf-monkey) protein is Cathelicidin antimicrobial peptide.